An 82-amino-acid polypeptide reads, in one-letter code: Kappa-actitoxin-Avd4j (82 aa).

The signal sequence occupies residues Met-1 to Ala-19. A propeptide spanning residues Ala-20 to Phe-31 is cleaved from the precursor. 3 cysteine pairs are disulfide-bonded: Cys-38–Cys-73, Cys-40–Cys-66, and Cys-56–Cys-74.

This sequence belongs to the sea anemone type 3 (BDS) potassium channel toxin family. In terms of tissue distribution, weakly expressed in the ectodermal tissue from the distal and proximal tentacles, body wall, and oral disk.

The protein localises to the secreted. The protein resides in the nematocyst. In terms of biological role, blocks Kv3 voltage-gated potassium channels. Reduces blood pressure. The polypeptide is Kappa-actitoxin-Avd4j (Anemonia viridis (Snakelocks anemone)).